A 162-amino-acid polypeptide reads, in one-letter code: Small ribosomal subunit protein uS9 (162 aa).

It belongs to the universal ribosomal protein uS9 family.

The sequence is that of Small ribosomal subunit protein uS9 from Methylobacterium sp. (strain 4-46).